A 380-amino-acid chain; its full sequence is Cytochrome b (380 aa).

A run of 4 helical transmembrane segments spans residues 34 to 54 (FGSLLGICLATQILTGLLLAA), 78 to 99 (WLIRNLHANGASFFFICIYLHI), 114 to 134 (WNTGVILLLTLMATAFVGYVL), and 179 to 199 (FFTLHFLLPFMIMGLTLIHLT). Heme b-binding residues include His-84 and His-98. Heme b is bound by residues His-183 and His-197. His-202 serves as a coordination point for a ubiquinone. 4 helical membrane-spanning segments follow: residues 227–247 (LKDILGFTLMLLPLMTLALFS), 289–309 (LGGVLALAASVLILFLAPLLH), 321–341 (FSQLLFWTLAANLLILTWVGS), and 348–368 (FIIIGQLASLTYFTILLILFP).

The protein belongs to the cytochrome b family. In terms of assembly, the cytochrome bc1 complex contains 11 subunits: 3 respiratory subunits (MT-CYB, CYC1 and UQCRFS1), 2 core proteins (UQCRC1 and UQCRC2) and 6 low-molecular weight proteins (UQCRH/QCR6, UQCRB/QCR7, UQCRQ/QCR8, UQCR10/QCR9, UQCR11/QCR10 and a cleavage product of UQCRFS1). This cytochrome bc1 complex then forms a dimer. It depends on heme b as a cofactor.

Its subcellular location is the mitochondrion inner membrane. Functionally, component of the ubiquinol-cytochrome c reductase complex (complex III or cytochrome b-c1 complex) that is part of the mitochondrial respiratory chain. The b-c1 complex mediates electron transfer from ubiquinol to cytochrome c. Contributes to the generation of a proton gradient across the mitochondrial membrane that is then used for ATP synthesis. This chain is Cytochrome b (MT-CYB), found in Antigone antigone (Sarus crane).